Here is a 369-residue protein sequence, read N- to C-terminus: DNA replication and repair protein RecF (369 aa).

30–37 (GENAQGKT) contacts ATP.

Belongs to the RecF family.

Its subcellular location is the cytoplasm. Its function is as follows. The RecF protein is involved in DNA metabolism; it is required for DNA replication and normal SOS inducibility. RecF binds preferentially to single-stranded, linear DNA. It also seems to bind ATP. The protein is DNA replication and repair protein RecF of Oceanobacillus iheyensis (strain DSM 14371 / CIP 107618 / JCM 11309 / KCTC 3954 / HTE831).